The sequence spans 444 residues: U-box domain-containing protein 31 (444 aa).

One can recognise a U-box domain in the interval 59-133 (EIPSVFICPI…YTWFSQKYVL (75 aa)). ARM repeat units follow at residues 301–340 (KQVR…SLCL) and 343–382 (EGRI…SVCK).

The enzyme catalyses S-ubiquitinyl-[E2 ubiquitin-conjugating enzyme]-L-cysteine + [acceptor protein]-L-lysine = [E2 ubiquitin-conjugating enzyme]-L-cysteine + N(6)-ubiquitinyl-[acceptor protein]-L-lysine.. It participates in protein modification; protein ubiquitination. In terms of biological role, functions as an E3 ubiquitin ligase. The sequence is that of U-box domain-containing protein 31 (PUB31) from Arabidopsis thaliana (Mouse-ear cress).